Here is a 314-residue protein sequence, read N- to C-terminus: tRNA dimethylallyltransferase (314 aa).

13 to 20 (GPTAVGKT) provides a ligand contact to ATP. Residue 15–20 (TAVGKT) participates in substrate binding. The interaction with substrate tRNA stretch occupies residues 38–41 (DSMQ).

Belongs to the IPP transferase family. Monomer. Requires Mg(2+) as cofactor.

It catalyses the reaction adenosine(37) in tRNA + dimethylallyl diphosphate = N(6)-dimethylallyladenosine(37) in tRNA + diphosphate. Its function is as follows. Catalyzes the transfer of a dimethylallyl group onto the adenine at position 37 in tRNAs that read codons beginning with uridine, leading to the formation of N6-(dimethylallyl)adenosine (i(6)A). The chain is tRNA dimethylallyltransferase from Bacillus licheniformis (strain ATCC 14580 / DSM 13 / JCM 2505 / CCUG 7422 / NBRC 12200 / NCIMB 9375 / NCTC 10341 / NRRL NRS-1264 / Gibson 46).